The primary structure comprises 525 residues: GMP synthase [glutamine-hydrolyzing] (525 aa).

Positions 9–207 (RILILDFGSQ…VLTISGCEAL (199 aa)) constitute a Glutamine amidotransferase type-1 domain. The active-site Nucleophile is the cysteine 86. Catalysis depends on residues histidine 181 and glutamate 183. The 193-residue stretch at 208 to 400 (WTPAKIVDDA…LGLPYDMVYR (193 aa)) folds into the GMPS ATP-PPase domain. 235–241 (SGGVDSS) contacts ATP.

In terms of assembly, homodimer.

It catalyses the reaction XMP + L-glutamine + ATP + H2O = GMP + L-glutamate + AMP + diphosphate + 2 H(+). It functions in the pathway purine metabolism; GMP biosynthesis; GMP from XMP (L-Gln route): step 1/1. Functionally, catalyzes the synthesis of GMP from XMP. This is GMP synthase [glutamine-hydrolyzing] from Marinobacter nauticus (strain ATCC 700491 / DSM 11845 / VT8) (Marinobacter aquaeolei).